Consider the following 166-residue polypeptide: Large ribosomal subunit protein uL10 (166 aa).

The protein belongs to the universal ribosomal protein uL10 family. Part of the ribosomal stalk of the 50S ribosomal subunit. The N-terminus interacts with L11 and the large rRNA to form the base of the stalk. The C-terminus forms an elongated spine to which L12 dimers bind in a sequential fashion forming a multimeric L10(L12)X complex.

Its function is as follows. Forms part of the ribosomal stalk, playing a central role in the interaction of the ribosome with GTP-bound translation factors. The chain is Large ribosomal subunit protein uL10 from Bacillus cereus (strain ATCC 14579 / DSM 31 / CCUG 7414 / JCM 2152 / NBRC 15305 / NCIMB 9373 / NCTC 2599 / NRRL B-3711).